The sequence spans 374 residues: dTDP-3-amino-3,4,6-trideoxy-alpha-D-glucose transaminase (374 aa).

Pyridoxal 5'-phosphate is bound by residues G60, Q160, 181–186 (SFYPTK), Y214, Y221, 229–231 (NSR), and Y316. Position 186 is an N6-(pyridoxal phosphate)lysine (K186).

The protein belongs to the degT/dnrJ/eryC1 family. Requires pyridoxal 5'-phosphate as cofactor.

It catalyses the reaction dTDP-3-amino-3,4,6-trideoxy-alpha-D-glucose + 2-oxoglutarate = dTDP-3-dehydro-4,6-dideoxy-alpha-D-glucose + L-glutamate. Its pathway is antibiotic biosynthesis. Its function is as follows. Involved in the biosynthesis of the amino sugar dTDP-L-megosamine which is found in the macrolide antibiotic and antiparasitic megalomicin A. Catalyzes the reversible transfer of the amino group from L-glutamate to the C-3 position of dTDP-3-keto-4,6-deoxyglucose to yield dTDP-3-amino-3,4,6-trideoxyglucose. In Micromonospora megalomicea subsp. nigra, this protein is dTDP-3-amino-3,4,6-trideoxy-alpha-D-glucose transaminase.